The sequence spans 368 residues: Phosphate acyltransferase (368 aa).

Belongs to the PlsX family. Homodimer. Probably interacts with PlsY.

It is found in the cytoplasm. It carries out the reaction a fatty acyl-[ACP] + phosphate = an acyl phosphate + holo-[ACP]. It functions in the pathway lipid metabolism; phospholipid metabolism. In terms of biological role, catalyzes the reversible formation of acyl-phosphate (acyl-PO(4)) from acyl-[acyl-carrier-protein] (acyl-ACP). This enzyme utilizes acyl-ACP as fatty acyl donor, but not acyl-CoA. This Methylibium petroleiphilum (strain ATCC BAA-1232 / LMG 22953 / PM1) protein is Phosphate acyltransferase.